A 279-amino-acid polypeptide reads, in one-letter code: Succinate dehydrogenase [ubiquinone] iron-sulfur subunit 1, mitochondrial (279 aa).

A mitochondrion-targeting transit peptide spans 1 to 28 (MASGLIGRLVGTKPSKLATAARLIPARW). In terms of domain architecture, 2Fe-2S ferredoxin-type spans 52-141 (FQIYRWNPDN…ETTITPLPHM (90 aa)). [2Fe-2S] cluster contacts are provided by cysteine 102, cysteine 107, and cysteine 122. Positions 184–214 (DRAKLDGMYECILCACCSTSCPSYWWNPESY) constitute a 4Fe-4S ferredoxin-type domain. Positions 194, 197, and 200 each coordinate [4Fe-4S] cluster. Cysteine 204 provides a ligand contact to [3Fe-4S] cluster. An a ubiquinone-binding site is contributed by tryptophan 209. The [3Fe-4S] cluster site is built by cysteine 251 and cysteine 257. Residue cysteine 261 coordinates [4Fe-4S] cluster.

Belongs to the succinate dehydrogenase/fumarate reductase iron-sulfur protein family. Component of complex II composed of eight subunits in plants: four classical SDH subunits SDH1, SDH2, SDH3 and SDH4 (a flavoprotein (FP), an iron-sulfur protein (IP), and a cytochrome b composed of a large and a small subunit.), as well as four subunits unknown in mitochondria from bacteria and heterotrophic eukaryotes. [2Fe-2S] cluster is required as a cofactor. Requires [3Fe-4S] cluster as cofactor. [4Fe-4S] cluster serves as cofactor. As to expression, ubiquitous. Preferentially expressed in flowers and inflorescences.

The protein localises to the mitochondrion inner membrane. It carries out the reaction a quinone + succinate = fumarate + a quinol. It participates in carbohydrate metabolism; tricarboxylic acid cycle; fumarate from succinate (eukaryal route): step 1/1. Iron-sulfur protein (IP) subunit of succinate dehydrogenase (SDH) that is involved in complex II of the mitochondrial electron transport chain and is responsible for transferring electrons from succinate to ubiquinone (coenzyme Q). The sequence is that of Succinate dehydrogenase [ubiquinone] iron-sulfur subunit 1, mitochondrial (SDH2-1) from Arabidopsis thaliana (Mouse-ear cress).